The primary structure comprises 61 residues: Large ribosomal subunit protein bL28 (61 aa).

The protein belongs to the bacterial ribosomal protein bL28 family.

In Geobacillus kaustophilus (strain HTA426), this protein is Large ribosomal subunit protein bL28.